The primary structure comprises 438 residues: Glutamate-1-semialdehyde 2,1-aminomutase (438 aa).

Lysine 274 carries the N6-(pyridoxal phosphate)lysine modification.

The protein belongs to the class-III pyridoxal-phosphate-dependent aminotransferase family. HemL subfamily. Homodimer. Requires pyridoxal 5'-phosphate as cofactor.

It localises to the cytoplasm. It catalyses the reaction (S)-4-amino-5-oxopentanoate = 5-aminolevulinate. It functions in the pathway porphyrin-containing compound metabolism; protoporphyrin-IX biosynthesis; 5-aminolevulinate from L-glutamyl-tRNA(Glu): step 2/2. This chain is Glutamate-1-semialdehyde 2,1-aminomutase, found in Salinibacter ruber (strain DSM 13855 / M31).